The following is a 200-amino-acid chain: UPF0316 protein SACOL1973 (200 aa).

The next 3 membrane-spanning stretches (helical) occupy residues 8-28, 40-60, and 66-86; these read PWLM…FLTM, IAAS…GLVM, and IQNI…GMKI.

Belongs to the UPF0316 family.

The protein localises to the cell membrane. The protein is UPF0316 protein SACOL1973 of Staphylococcus aureus (strain COL).